A 658-amino-acid polypeptide reads, in one-letter code: Glycogen debranching enzyme (658 aa).

D336 functions as the Nucleophile in the catalytic mechanism. E371 acts as the Proton donor in catalysis.

It belongs to the glycosyl hydrolase 13 family.

The enzyme catalyses Hydrolysis of (1-&gt;6)-alpha-D-glucosidic linkages to branches with degrees of polymerization of three or four glucose residues in limit dextrin.. It functions in the pathway glycan degradation; glycogen degradation. Functionally, removes maltotriose and maltotetraose chains that are attached by 1,6-alpha-linkage to the limit dextrin main chain, generating a debranched limit dextrin. The protein is Glycogen debranching enzyme of Klebsiella pneumoniae subsp. pneumoniae (strain ATCC 700721 / MGH 78578).